The chain runs to 346 residues: Tryptophan--tRNA ligase (346 aa).

Residues 21 to 23 and 30 to 31 each bind ATP; these read QPT and GN. The 'HIGH' region signature appears at 22-31; sequence PTADSYHLGN. Residue Asp147 coordinates L-tryptophan. ATP is bound by residues 159-161, Ile198, and 207-211; these read GED and KMSKS. Positions 207–211 match the 'KMSKS' region motif; the sequence is KMSKS.

It belongs to the class-I aminoacyl-tRNA synthetase family. In terms of assembly, homodimer.

The protein localises to the cytoplasm. It catalyses the reaction tRNA(Trp) + L-tryptophan + ATP = L-tryptophyl-tRNA(Trp) + AMP + diphosphate + H(+). In terms of biological role, catalyzes the attachment of tryptophan to tRNA(Trp). In Corynebacterium efficiens (strain DSM 44549 / YS-314 / AJ 12310 / JCM 11189 / NBRC 100395), this protein is Tryptophan--tRNA ligase.